The chain runs to 143 residues: Transcriptional regulator MraZ (143 aa).

2 consecutive SpoVT-AbrB domains span residues 5–47 and 76–119; these read SHAP…PMAE and AADD…DAQR.

It belongs to the MraZ family. In terms of assembly, forms oligomers.

The protein localises to the cytoplasm. Its subcellular location is the nucleoid. This is Transcriptional regulator MraZ from Frankia casuarinae (strain DSM 45818 / CECT 9043 / HFP020203 / CcI3).